The chain runs to 197 residues: Holliday junction branch migration complex subunit RuvA (197 aa).

The segment at 1–64 (MIDSIVGIIQ…LSELECYGFL (64 aa)) is domain I. The interval 65–143 (TREERELFLK…KEFKVASTSG (79 aa)) is domain II. The flexible linker stretch occupies residues 144 to 152 (KEEKTYEKL). The interval 152-197 (LEEISLALLSLGYDIDEVNQVLSSEDFSELSLEDGIKLALKKLSKI) is domain III.

The protein belongs to the RuvA family. In terms of assembly, homotetramer. Forms an RuvA(8)-RuvB(12)-Holliday junction (HJ) complex. HJ DNA is sandwiched between 2 RuvA tetramers; dsDNA enters through RuvA and exits via RuvB. An RuvB hexamer assembles on each DNA strand where it exits the tetramer. Each RuvB hexamer is contacted by two RuvA subunits (via domain III) on 2 adjacent RuvB subunits; this complex drives branch migration. In the full resolvosome a probable DNA-RuvA(4)-RuvB(12)-RuvC(2) complex forms which resolves the HJ.

It localises to the cytoplasm. Functionally, the RuvA-RuvB-RuvC complex processes Holliday junction (HJ) DNA during genetic recombination and DNA repair, while the RuvA-RuvB complex plays an important role in the rescue of blocked DNA replication forks via replication fork reversal (RFR). RuvA specifically binds to HJ cruciform DNA, conferring on it an open structure. The RuvB hexamer acts as an ATP-dependent pump, pulling dsDNA into and through the RuvAB complex. HJ branch migration allows RuvC to scan DNA until it finds its consensus sequence, where it cleaves and resolves the cruciform DNA. The sequence is that of Holliday junction branch migration complex subunit RuvA from Caldicellulosiruptor bescii (strain ATCC BAA-1888 / DSM 6725 / KCTC 15123 / Z-1320) (Anaerocellum thermophilum).